Reading from the N-terminus, the 76-residue chain is Exodeoxyribonuclease 7 small subunit (76 aa).

Belongs to the XseB family. As to quaternary structure, heterooligomer composed of large and small subunits.

It localises to the cytoplasm. The enzyme catalyses Exonucleolytic cleavage in either 5'- to 3'- or 3'- to 5'-direction to yield nucleoside 5'-phosphates.. Bidirectionally degrades single-stranded DNA into large acid-insoluble oligonucleotides, which are then degraded further into small acid-soluble oligonucleotides. The protein is Exodeoxyribonuclease 7 small subunit of Latilactobacillus sakei subsp. sakei (strain 23K) (Lactobacillus sakei subsp. sakei).